Consider the following 135-residue polypeptide: uncharacterized protein (135 aa).

Helical transmembrane passes span 12–32 (IPIL…YNGI), 68–88 (SMIG…AKFC), and 98–118 (GILY…FYLF).

It is found in the cell membrane. This is an uncharacterized protein from Methanocaldococcus jannaschii (strain ATCC 43067 / DSM 2661 / JAL-1 / JCM 10045 / NBRC 100440) (Methanococcus jannaschii).